The primary structure comprises 285 residues: Methionine aminopeptidase 2 (285 aa).

His-114 is a substrate binding site. Positions 131, 142, and 205 each coordinate a divalent metal cation. His-212 is a binding site for substrate. Residues Glu-238 and Glu-269 each coordinate a divalent metal cation.

As to quaternary structure, monomer. The cofactor is Co(2+). Requires Zn(2+) as cofactor. Mn(2+) serves as cofactor. It depends on Fe(2+) as a cofactor.

It catalyses the reaction Release of N-terminal amino acids, preferentially methionine, from peptides and arylamides.. With respect to regulation, inhibited by bengamide derivatives and by various metalloform-selective inhibitors. In terms of biological role, removes the N-terminal methionine from nascent proteins. The N-terminal methionine is often cleaved when the second residue in the primary sequence is small and uncharged (Met-Ala-, Cys, Gly, Pro, Ser, Thr, or Val). Requires deformylation of the N(alpha)-formylated initiator methionine before it can be hydrolyzed. The chain is Methionine aminopeptidase 2 from Mycobacterium tuberculosis (strain ATCC 25618 / H37Rv).